Here is a 545-residue protein sequence, read N- to C-terminus: Intercellular adhesion molecule 1 (545 aa).

Positions 1–27 (MASTRARPMLPLLLVLVAVVIPGPVGA) are cleaved as a signal peptide. The Extracellular portion of the chain corresponds to 28–492 (QVSIHPTEAF…HLTVLYHDQN (465 aa)). Ig-like C2-type domains lie at 41 to 103 (GGSV…QSSA) and 128 to 193 (GKNL…LDLR). N-linked (GlcNAc...) asparagine glycosylation occurs at Asn47. Disulfide bonds link Cys48–Cys92, Cys52–Cys96, and Cys135–Cys186. Asn154 carries an N-linked (GlcNAc...) asparagine glycan. The short motif at 177 to 179 (RGD) is the Cell attachment site element. N-linked (GlcNAc...) asparagine glycans are attached at residues Asn183 and Asn202. Residues 230–297 (GTQQKFLCSL…LRCVLELADQ (68 aa)) enclose the Ig-like C2-type 3 domain. An intrachain disulfide couples Cys237 to Cys290. Asn309, Asn344, Asn396, Asn417, Asn439, and Asn464 each carry an N-linked (GlcNAc...) asparagine glycan. The Ig-like C2-type 4 domain maps to 325–389 (GDQVTVKCEA…FFCSAALEVD (65 aa)). A disulfide bridge connects residues Cys332 and Cys382. The disordered stretch occupies residues 343-365 (LNSTSPRPPTSQGTSPRPPTSQI). Cystine bridges form between Cys414-Cys430, Cys430-Cys469, and Cys442-Cys469. In terms of domain architecture, Ig-like C2-type 5 spans 423–476 (GSQQTLTCQPQGNPAPNLTCSRKADGVPLPIGMVKSVKREMNGTYKCRAFSSRG). The chain crosses the membrane as a helical span at residues 493–517 (TWVIIVGVLVLIIAGFVIVASIYTY). Topologically, residues 518–545 (YRQRKIRIYKLQKAQEEALKLKVQAPPP) are cytoplasmic.

This sequence belongs to the immunoglobulin superfamily. ICAM family. As to quaternary structure, homodimer. Interacts with MUC1 and promotes cell aggregation in epithelial cells. Interacts with ARHGEF26/SGEF. Interacts (on T cell side) with CD81, CD247 and CD9 at immunological synapses between antigen-presenting cells and T cells. Post-translationally, monoubiquitinated, which is promoted by MARCH9 and leads to endocytosis.

It localises to the membrane. Its function is as follows. ICAM proteins are ligands for the leukocyte adhesion protein LFA-1 (integrin alpha-L/beta-2). During leukocyte trans-endothelial migration, ICAM1 engagement promotes the assembly of endothelial apical cups through ARHGEF26/SGEF and RHOG activation. This Rattus norvegicus (Rat) protein is Intercellular adhesion molecule 1 (Icam1).